Here is a 121-residue protein sequence, read N- to C-terminus: Large ribosomal subunit protein bL19 (121 aa).

Belongs to the bacterial ribosomal protein bL19 family.

This protein is located at the 30S-50S ribosomal subunit interface and may play a role in the structure and function of the aminoacyl-tRNA binding site. The sequence is that of Large ribosomal subunit protein bL19 from Chlorobium phaeobacteroides (strain BS1).